We begin with the raw amino-acid sequence, 195 residues long: Imidazoleglycerol-phosphate dehydratase (195 aa).

Belongs to the imidazoleglycerol-phosphate dehydratase family.

Its subcellular location is the cytoplasm. The catalysed reaction is D-erythro-1-(imidazol-4-yl)glycerol 3-phosphate = 3-(imidazol-4-yl)-2-oxopropyl phosphate + H2O. The protein operates within amino-acid biosynthesis; L-histidine biosynthesis; L-histidine from 5-phospho-alpha-D-ribose 1-diphosphate: step 6/9. The polypeptide is Imidazoleglycerol-phosphate dehydratase (Paraburkholderia phytofirmans (strain DSM 17436 / LMG 22146 / PsJN) (Burkholderia phytofirmans)).